Consider the following 750-residue polypeptide: Photosystem I P700 chlorophyll a apoprotein A1 (750 aa).

Transmembrane regions (helical) follow at residues 72 to 95 (VFSA…FHGA), 158 to 181 (LYTT…FHYH), 197 to 221 (MNHH…HVSL), 293 to 311 (TVHH…GHMY), 348 to 371 (WHAQ…HHMY), 387 to 413 (LSLF…IFMV), 435 to 457 (AIIS…LYIH), and 532 to 550 (FLVH…LILL). Positions 574 and 583 each coordinate [4Fe-4S] cluster. Transmembrane regions (helical) follow at residues 590–611 (HVFL…HFSW) and 664–686 (LSAY…MFLF). A chlorophyll a'-binding site is contributed by His675. Met683 and Tyr691 together coordinate chlorophyll a. Position 692 (Trp692) interacts with phylloquinone. Residues 724 to 744 (AVGVAHYLLGGIATTWAFFLA) traverse the membrane as a helical segment.

It belongs to the PsaA/PsaB family. In terms of assembly, the PsaA/B heterodimer binds the P700 chlorophyll special pair and subsequent electron acceptors. PSI consists of a core antenna complex that captures photons, and an electron transfer chain that converts photonic excitation into a charge separation. The eukaryotic PSI reaction center is composed of at least 11 subunits. P700 is a chlorophyll a/chlorophyll a' dimer, A0 is one or more chlorophyll a, A1 is one or both phylloquinones and FX is a shared 4Fe-4S iron-sulfur center. is required as a cofactor.

The protein resides in the plastid. It localises to the chloroplast thylakoid membrane. It catalyses the reaction reduced [plastocyanin] + hnu + oxidized [2Fe-2S]-[ferredoxin] = oxidized [plastocyanin] + reduced [2Fe-2S]-[ferredoxin]. In terms of biological role, psaA and PsaB bind P700, the primary electron donor of photosystem I (PSI), as well as the electron acceptors A0, A1 and FX. PSI is a plastocyanin-ferredoxin oxidoreductase, converting photonic excitation into a charge separation, which transfers an electron from the donor P700 chlorophyll pair to the spectroscopically characterized acceptors A0, A1, FX, FA and FB in turn. Oxidized P700 is reduced on the lumenal side of the thylakoid membrane by plastocyanin. This is Photosystem I P700 chlorophyll a apoprotein A1 from Mesostigma viride (Green alga).